The sequence spans 93 residues: Small ribosomal subunit protein uS19 (93 aa).

The protein belongs to the universal ribosomal protein uS19 family.

Its function is as follows. Protein S19 forms a complex with S13 that binds strongly to the 16S ribosomal RNA. This chain is Small ribosomal subunit protein uS19, found in Frankia alni (strain DSM 45986 / CECT 9034 / ACN14a).